Consider the following 263-residue polypeptide: Small ribosomal subunit protein eS4 (263 aa).

In terms of domain architecture, S4 RNA-binding spans 42 to 104; sequence LPLIIFLRNR…TGEHFRLVYD (63 aa).

Belongs to the eukaryotic ribosomal protein eS4 family. Component of the small ribosomal subunit.

The protein localises to the cytoplasm. Functionally, component of the small ribosomal subunit. The ribosome is a large ribonucleoprotein complex responsible for the synthesis of proteins in the cell. The sequence is that of Small ribosomal subunit protein eS4 (rps4) from Xenopus laevis (African clawed frog).